A 545-amino-acid polypeptide reads, in one-letter code: Beta-sesquiphellandrene synthase (545 aa).

Mg(2+) contacts are provided by Asp299, Asp303, Asn443, Ser447, and Glu451. The DDXXD motif signature appears at 299–303 (DDIMD).

Belongs to the terpene synthase family. Mg(2+) is required as a cofactor. The cofactor is Mn(2+).

Its subcellular location is the cytoplasm. It catalyses the reaction (2E,6E)-farnesyl diphosphate = beta-sesquiphellandrene + diphosphate. It participates in secondary metabolite biosynthesis; terpenoid biosynthesis. Functionally, sesquiterpene synthase converting farnesyl diphosphate into beta-sesquiphellandrene and six minor products, zingiberene, 7-epi-sesquithujene, sesquisabinene A, (E)-alpha-bergamotene, (E)-beta-farnesene and beta-bisabolene. Can also accept geranyl diphosphate as substrate, producing nine monoterpenes, with myrcene and limonene as the major products. The protein is Beta-sesquiphellandrene synthase (TPS2) of Sorghum bicolor (Sorghum).